Here is a 124-residue protein sequence, read N- to C-terminus: Putative B3 domain-containing protein At1g51970 (124 aa).

The segment at residues 18-124 (VLKKNLTESD…SRRFLFHHIN (107 aa)) is a DNA-binding region (TF-B3).

It is found in the nucleus. The protein is Putative B3 domain-containing protein At1g51970 of Arabidopsis thaliana (Mouse-ear cress).